Reading from the N-terminus, the 495-residue chain is MGRRRQRVDPAAGARAGALPEAIAALSRSLPSGPSPEIFRRAKFDRPEATSALWQLLFRVLSPLPAGNALASLALEVQARLVKSALCSQGYPRLALAQLPEDGSQGSRELLLALSWLLARGPVPEQMLAQARVPLGDEMTVCQCEALASPGPPAPHMEAEGPVDVRHVQWLMGKLRFRWRQLVSSQQEQCALLSKIHLYTRGCHSDQSLSHLSVTEAEMLRDPEGGQQVSGAGAAQNLDLAYPKCLHSFCTPGMGPRTFWNDLWLVCEQPGLLPGDWAAPLDPGGASACSLLSPFRALLRTLERENQRLEAVLAWRRSELVFWRWMDTVLGTCAPEVPAAASQPTFLPWVPERGGGELDLVVRELQALEEELREAAERRRAAWEAKAGGCGRGPEWSAARRASREAVEKELGALQQCWERDGGPAQPHGPHRLVRREDGAAGDRDLRAAVVIRTLRSQEACLEAVLRRLQGQCRQELARLVGARPGLIWIPPPGR.

Positions 355 to 387 (GGELDLVVRELQALEEELREAAERRRAAWEAKA) form a coiled coil. The tract at residues 417 to 440 (CWERDGGPAQPHGPHRLVRREDGA) is disordered. Residues 452 to 480 (IRTLRSQEACLEAVLRRLQGQCRQELARL) adopt a coiled-coil conformation.

As to quaternary structure, interacts with TEDC2. Found in a complex with TEDC1, TEDC2, TUBE1 and TUBD1.

It localises to the cell projection. It is found in the cilium. The protein resides in the cytoplasm. The protein localises to the cytoskeleton. Its subcellular location is the microtubule organizing center. It localises to the centrosome. It is found in the centriole. Its function is as follows. Acts as a positive regulator of ciliary hedgehog signaling. Required for centriole stability. May play a role in counteracting perturbation of actin filaments, such as after treatment with the actin depolymerizing microbial metabolite Chivosazole F. This is Tubulin epsilon and delta complex protein 1 from Homo sapiens (Human).